Reading from the N-terminus, the 666-residue chain is UvrABC system protein B (666 aa).

One can recognise a Helicase ATP-binding domain in the interval 28 to 171; sequence NNINQGIQRQ…YLHVGELIEF (144 aa). 41–48 is a binding site for ATP; that stretch reads GATGTGKT. A Beta-hairpin motif is present at residues 94–117; that stretch reads YFDYYQPEAYKPITDTYIEKDSVT. A Helicase C-terminal domain is found at 436–598; the sequence is QIDDLINELM…IIPKTIIKPI (163 aa). The UVR domain occupies 624–659; that stretch reads NQKIKELKKKMEEAAKKREYEVAAQYRDMIVELEAI.

This sequence belongs to the UvrB family. Forms a heterotetramer with UvrA during the search for lesions. Interacts with UvrC in an incision complex.

It localises to the cytoplasm. The UvrABC repair system catalyzes the recognition and processing of DNA lesions. A damage recognition complex composed of 2 UvrA and 2 UvrB subunits scans DNA for abnormalities. Upon binding of the UvrA(2)B(2) complex to a putative damaged site, the DNA wraps around one UvrB monomer. DNA wrap is dependent on ATP binding by UvrB and probably causes local melting of the DNA helix, facilitating insertion of UvrB beta-hairpin between the DNA strands. Then UvrB probes one DNA strand for the presence of a lesion. If a lesion is found the UvrA subunits dissociate and the UvrB-DNA preincision complex is formed. This complex is subsequently bound by UvrC and the second UvrB is released. If no lesion is found, the DNA wraps around the other UvrB subunit that will check the other stand for damage. In Ureaplasma parvum serovar 3 (strain ATCC 27815 / 27 / NCTC 11736), this protein is UvrABC system protein B.